We begin with the raw amino-acid sequence, 166 residues long: Phosphopantetheine adenylyltransferase (166 aa).

Threonine 11 contributes to the substrate binding site. ATP-binding positions include 11-12 and histidine 19; that span reads TF. Substrate contacts are provided by lysine 43, threonine 79, and arginine 93. ATP contacts are provided by residues glutamate 104 and 128–134; that span reads LEPLNST.

Belongs to the bacterial CoaD family. As to quaternary structure, homohexamer. Mg(2+) is required as a cofactor.

The protein localises to the cytoplasm. It carries out the reaction (R)-4'-phosphopantetheine + ATP + H(+) = 3'-dephospho-CoA + diphosphate. It functions in the pathway cofactor biosynthesis; coenzyme A biosynthesis; CoA from (R)-pantothenate: step 4/5. Functionally, reversibly transfers an adenylyl group from ATP to 4'-phosphopantetheine, yielding dephospho-CoA (dPCoA) and pyrophosphate. The polypeptide is Phosphopantetheine adenylyltransferase (Lactococcus lactis subsp. cremoris (strain MG1363)).